The following is a 431-amino-acid chain: Ribosomal RNA small subunit methyltransferase B (431 aa).

S-adenosyl-L-methionine is bound by residues 254–260, Asp-277, Asp-303, and Asp-322; that span reads CAAPGGK. The active-site Nucleophile is Cys-375. The interval 398-417 is disordered; that stretch reads LHATGTPASPGQQNLPGPEE. Residues 403 to 412 are compositionally biased toward polar residues; it reads TPASPGQQNL.

Belongs to the class I-like SAM-binding methyltransferase superfamily. RsmB/NOP family.

It localises to the cytoplasm. It carries out the reaction cytidine(967) in 16S rRNA + S-adenosyl-L-methionine = 5-methylcytidine(967) in 16S rRNA + S-adenosyl-L-homocysteine + H(+). Functionally, specifically methylates the cytosine at position 967 (m5C967) of 16S rRNA. The chain is Ribosomal RNA small subunit methyltransferase B from Klebsiella pneumoniae (strain 342).